The sequence spans 168 residues: DAZ-associated protein 2 (168 aa).

The segment covering 1 to 13 has biased composition (low complexity); that stretch reads MNSKGQYPTQPTY. Positions 1–25 are disordered; it reads MNSKGQYPTQPTYPVQPPGNPVYPQ. The PPAY signature appears at 39–42; that stretch reads PPAY. Phosphoserine is present on Ser-77.

In terms of assembly, interacts with SOX6. Interacts with DAZ1 and DAZL. Interacts with IL17RB. May interact with FAM168B. Interacts with INCA1. Interacts with EIF4G1 and EIF4G2. Interacts (via PPAY motif) with NEDD4 (via WW domains). Interacts with transcription factor TCF4; the interaction results in localization of DAZAP2 to the nucleus. Interacts with transcription factors TCF7 and TCF7L1. Interacts with transcription factor LEF1. Interacts with serine/threonine-protein kinase HIPK2; the interaction results in phosphorylation of DAZAP2 which causes localization of DAZAP2 to the nucleus, reduces interaction of DAZAP2 with HIPK2 and prevents DAZAP2-dependent degradation of HIPK2. Interacts with ubiquitin ligase SIAH1; the interaction is decreased following phosphorylation of DAZAP2 by HIPK2. Interacts with TP53; the interaction is triggered by DNA damage. Ubiquitinated by SMURF2, leading to proteasomal degradation. Ubiquitinated by NEDD4, leading to proteasomal degradation. Post-translationally, following DNA damage, phosphorylated by HIPK2 which promotes DAZAP2 localization to the nucleus, reduces interaction of DAZAP2 with HIPK2 and SIAH1, and prevents DAZAP2-dependent ubiquitination of HIPK2 by E3 ubiquitin-protein ligase SIAH1 and subsequent HIPK2 proteasomal degradation.

Its subcellular location is the cytoplasm. It localises to the nucleus. It is found in the nucleus speckle. The protein resides in the nuclear body. The protein localises to the stress granule. In terms of biological role, in unstressed cells, promotes SIAH1-mediated polyubiquitination and degradation of the serine/threonine-protein kinase HIPK2, probably by acting as a loading factor that potentiates complex formation between HIPK2 and ubiquitin ligase SIAH1. In response to DNA damage, localizes to the nucleus following phosphorylation by HIPK2 and modulates the expression of a subset of TP53/p53 target genes by binding to TP53 at target gene promoters. This limits the expression of a number of cell death-mediating TP53 target genes, reducing DNA damage-induced cell death. Enhances the binding of transcription factor TCF7L2/TCF4, a Wnt signaling pathway effector, to the promoters of target genes. Plays a role in stress granule formation. In Bos taurus (Bovine), this protein is DAZ-associated protein 2.